A 159-amino-acid chain; its full sequence is Serine-protein kinase RsbW (159 aa).

The protein belongs to the anti-sigma-factor family.

The catalysed reaction is L-seryl-[protein] + ATP = O-phospho-L-seryl-[protein] + ADP + H(+). It catalyses the reaction L-threonyl-[protein] + ATP = O-phospho-L-threonyl-[protein] + ADP + H(+). Negative regulator of sigma-B activity. Phosphorylates and inactivates its specific antagonist protein, RsbV. Upon phosphorylation of RsbV, RsbW is released and binds to sigma-B, thereby blocking its ability to form an RNA polymerase holoenzyme (E-sigma-B). The protein is Serine-protein kinase RsbW of Staphylococcus aureus (strain MSSA476).